The sequence spans 161 residues: Small ribosomal subunit protein uS19 (161 aa).

Residues 1–19 (MARQKKYSGKGGARKKNKQ) show a composition bias toward basic residues. The segment at 1-26 (MARQKKYSGKGGARKKNKQKQNVAPR) is disordered.

The protein belongs to the universal ribosomal protein uS19 family.

In terms of biological role, protein S19 forms a complex with S13 that binds strongly to the 16S ribosomal RNA. This Methanococcus maripaludis (strain DSM 14266 / JCM 13030 / NBRC 101832 / S2 / LL) protein is Small ribosomal subunit protein uS19.